We begin with the raw amino-acid sequence, 829 residues long: Periplasmic nitrate reductase (829 aa).

A signal peptide (tat-type signal) is located at residues 1–29 (MKMTRRAFVKANAAASAAAVAGVTLPATA). Residues 41 to 97 (ITWDKAPCRFCGTGCSVLVGTQNGKVVATQGDPEAPVNKGLNCIKGYFLSKIMYGKD) enclose the 4Fe-4S Mo/W bis-MGD-type domain. Positions 48, 51, 55, and 83 each coordinate [4Fe-4S] cluster. Mo-bis(molybdopterin guanine dinucleotide) contacts are provided by residues Lys-85, Gln-152, Asn-177, Cys-181, 214–221 (WGSNMAEM), 245–249 (STYYH), 264–266 (QSD), Met-374, Gln-378, Asn-484, 510–511 (SD), Lys-533, Asp-560, and 718–727 (TGRVLEHWHT). Phe-794 provides a ligand contact to substrate. Mo-bis(molybdopterin guanine dinucleotide) contacts are provided by Asn-802 and Lys-819.

Belongs to the prokaryotic molybdopterin-containing oxidoreductase family. NasA/NapA/NarB subfamily. In terms of assembly, component of the periplasmic nitrate reductase NapAB complex composed of NapA and NapB. [4Fe-4S] cluster serves as cofactor. It depends on Mo-bis(molybdopterin guanine dinucleotide) as a cofactor. In terms of processing, predicted to be exported by the Tat system. The position of the signal peptide cleavage has not been experimentally proven.

It localises to the periplasm. The catalysed reaction is 2 Fe(II)-[cytochrome] + nitrate + 2 H(+) = 2 Fe(III)-[cytochrome] + nitrite + H2O. In terms of biological role, catalytic subunit of the periplasmic nitrate reductase complex NapAB. Receives electrons from NapB and catalyzes the reduction of nitrate to nitrite. In Vibrio atlanticus (strain LGP32) (Vibrio splendidus (strain Mel32)), this protein is Periplasmic nitrate reductase.